The primary structure comprises 178 residues: Large ribosomal subunit protein bL17 (178 aa).

2 stretches are compositionally biased toward low complexity: residues 123–139 (KAPA…NTAT) and 151–160 (EDAAAQAPVA). Positions 123 to 178 (KAPASAADAKAQINTATEAKEAEPEAPAEDAAAQAPVADEQKAAEVDEKAEEKPEA) are disordered. Basic and acidic residues predominate over residues 161–178 (DEQKAAEVDEKAEEKPEA).

This sequence belongs to the bacterial ribosomal protein bL17 family. As to quaternary structure, part of the 50S ribosomal subunit. Contacts protein L32.

This chain is Large ribosomal subunit protein bL17, found in Cutibacterium acnes (strain DSM 16379 / KPA171202) (Propionibacterium acnes).